We begin with the raw amino-acid sequence, 1080 residues long: Isoleucine--tRNA ligase (1080 aa).

The 'HIGH' region motif lies at 48 to 58 (PYASGSIHLGT). The 'KMSKS' region motif lies at 628–632 (KMSKS). Position 631 (Lys631) interacts with ATP.

This sequence belongs to the class-I aminoacyl-tRNA synthetase family. IleS type 2 subfamily. In terms of assembly, monomer. The cofactor is Zn(2+).

The protein localises to the cytoplasm. The enzyme catalyses tRNA(Ile) + L-isoleucine + ATP = L-isoleucyl-tRNA(Ile) + AMP + diphosphate. In terms of biological role, catalyzes the attachment of isoleucine to tRNA(Ile). As IleRS can inadvertently accommodate and process structurally similar amino acids such as valine, to avoid such errors it has two additional distinct tRNA(Ile)-dependent editing activities. One activity is designated as 'pretransfer' editing and involves the hydrolysis of activated Val-AMP. The other activity is designated 'posttransfer' editing and involves deacylation of mischarged Val-tRNA(Ile). The protein is Isoleucine--tRNA ligase of Methanopyrus kandleri (strain AV19 / DSM 6324 / JCM 9639 / NBRC 100938).